A 367-amino-acid chain; its full sequence is GMP synthase [glutamine-hydrolyzing] subunit B (367 aa).

The 189-residue stretch at 2 to 190 (FDPASFVKEI…LKLPKEISER (189 aa)) folds into the GMPS ATP-PPase domain. Position 29–35 (29–35 (SGGVDST)) interacts with ATP.

In terms of assembly, heterodimer composed of a glutamine amidotransferase subunit (A) and a GMP-binding subunit (B).

The enzyme catalyses XMP + L-glutamine + ATP + H2O = GMP + L-glutamate + AMP + diphosphate + 2 H(+). The protein operates within purine metabolism; GMP biosynthesis; GMP from XMP (L-Gln route): step 1/1. Functionally, catalyzes the synthesis of GMP from XMP. This Saccharolobus islandicus (strain M.16.27) (Sulfolobus islandicus) protein is GMP synthase [glutamine-hydrolyzing] subunit B.